A 551-amino-acid chain; its full sequence is Eukaryotic translation initiation factor 3 subunit D-2 (551 aa).

The interval 108 to 152 (RTRGRTGRGTPNIASLGGSTAGGATASSTKYGKGRHTRNTQNVGR) is disordered. The segment covering 115-136 (RGTPNIASLGGSTAGGATASST) has biased composition (low complexity). Positions 290 to 304 (QFDLLTVNETSVEPP) are RNA gate. The tract at residues 527–551 (PENAFDSDRDEEEESSEPLSNSNDN) is disordered.

This sequence belongs to the eIF-3 subunit D family. In terms of assembly, component of the eukaryotic translation initiation factor 3 (eIF-3) complex. The eIF-3 complex interacts with pix.

The protein resides in the cytoplasm. Functionally, mRNA cap-binding component of the eukaryotic translation initiation factor 3 (eIF-3) complex, which is involved in protein synthesis of a specialized repertoire of mRNAs and, together with other initiation factors, stimulates binding of mRNA and methionyl-tRNAi to the 40S ribosome. The eIF-3 complex specifically targets and initiates translation of a subset of mRNAs involved in cell proliferation. In the eIF-3 complex, eif3d specifically recognizes and binds the 7-methylguanosine cap of a subset of mRNAs. The chain is Eukaryotic translation initiation factor 3 subunit D-2 from Drosophila simulans (Fruit fly).